A 228-amino-acid polypeptide reads, in one-letter code: Thermonuclease (228 aa).

The first 23 residues, 1–23 (MTEYLLSAGICMAIVSILLIGMA), serve as a signal peptide directing secretion. The propeptide occupies 24-60 (ISNVSKGQYAKRFFFFATSCLVLTLVVVSSLSSSANA). The span at 58 to 70 (ANASQTDNGVNRS) shows a compositional bias: polar residues. The tract at residues 58 to 83 (ANASQTDNGVNRSGSEDPTVYSATST) is disordered. D100 is a binding site for Ca(2+). The active site involves R114. Residues D119 and T120 each coordinate Ca(2+). Active-site residues include E122 and R166.

The protein belongs to the thermonuclease family. Ca(2+) is required as a cofactor.

The protein localises to the secreted. It catalyses the reaction Endonucleolytic cleavage to nucleoside 3'-phosphates and 3'-phosphooligonucleotide end-products.. Its function is as follows. Enzyme that catalyzes the hydrolysis of both DNA and RNA at the 5' position of the phosphodiester bond. The protein is Thermonuclease (nuc) of Staphylococcus aureus (strain Mu50 / ATCC 700699).